Consider the following 729-residue polypeptide: Cullin-6 (729 aa).

Residues 659–720 (DRKYEIKACI…EQLYIRRSEN (62 aa)) enclose the Cullin neddylation domain. Lys673 is covalently cross-linked (Glycyl lysine isopeptide (Lys-Gly) (interchain with G-Cter in NEDD8)).

This sequence belongs to the cullin family. In terms of assembly, probably interacts with skr-3. Neddylated; which enhances the ubiquitination activity of SCF-like complex.

Probable core component of cullin-based SCF-like E3 ubiquitin-protein ligase complexes which mediate the ubiquitination and subsequent proteasomal degradation of target proteins. The protein is Cullin-6 (cul-6) of Caenorhabditis elegans.